The primary structure comprises 1263 residues: DNA topoisomerase 2 (1263 aa).

Residues Asn80, Asn109, Ser137–Asn139, and Gly150–Lys157 contribute to the ATP site. Residues Val329–Lys331 form an interaction with DNA region. Gln362–Lys364 lines the ATP pocket. In terms of domain architecture, Toprim spans Cys439 to Gln553. 3 residues coordinate Mg(2+): Glu445, Asp522, and Asp524. One can recognise a Topo IIA-type catalytic domain in the interval Val737–Leu1223. Tyr828 serves as the catalytic O-(5'-phospho-DNA)-tyrosine intermediate. The interval Lys977 to Lys1015 is disordered. Low complexity predominate over residues Lys981–Gly1000. The tract at residues Lys1068–Asn1077 is interaction with DNA. The disordered stretch occupies residues Leu1244–Lys1263. Basic residues predominate over residues Lys1247–Lys1263.

This sequence belongs to the type II topoisomerase family. It depends on Mg(2+) as a cofactor. Mn(2+) is required as a cofactor. Requires Ca(2+) as cofactor.

The enzyme catalyses ATP-dependent breakage, passage and rejoining of double-stranded DNA.. In terms of biological role, can introduce negative superhelical turns into double-stranded circular DNA. The sequence is that of DNA topoisomerase 2 (TOP2) from Acanthamoeba polyphaga (Amoeba).